The following is a 1415-amino-acid chain: MSNWDYLDEVDILPKLPPNFDELRESKKWQERKEALEALLKVLTDNERLSTKASYAELIGHLQMVLAKDANINCQALAAKCIGKFATGLRAKFSSFAGPLLPVIFEKMKEKKPMLREPLVDCSNEVGRTMQSLETGQEDILAALAKPNPQIKQQTALFVARQLDLVVPAKQPKGFIKAVVPVFGKLTGDADQDVREASLQGLGAVQRIIGDKNVKNLLGDASSDEGKMKKIGEYAEKSTASFAEEQAKNAPPVAPTSSTPSASAASGDPSGGTATAVVSSGAPVAEADPWDFLDAFDVLSKMPDGFDTNIESKKWQERKEALEGLLQLITANPKLDPKANYGALVERLQKVLEKDANINVAALAANCITGIANGLRTKFQPFAVSVTPIIFEKFKEKKPTLRDPLVACIDAVVATTNLEAVGEIVLAALGKPNPSIKTQTDLFLQRCFMKLNSQTMPKKTLKTLIPSLIKHSGDSDSEVREASYAAMGAMMRAIGEKPSLQLLADIASDNLKMSKIKEFHQKALDEAGPAEIAEMVKSIHKADAPPAAAPPKKTAPPKKQPEDEEVVEEEDEPLKPPPGDKKKKVPVKENEENEPPVVAPKAELLLSDNEDKKQRIKEEKQLKLVKWNFQAPTDEHISQLQTLLGNQAKVSLMSQLFHKDFKQHLAALDSLVRLADTSPRSLLSNSDLLLKWCTLRFFETNPAALIKVLELCKVIVELIRDTETPMSQEEVSAFVPYLLLKTGEAKDNMRTSVRDIVNVLSDVVGPLKMTPMLLDALKSKNARQRSECLLVIEYYITNAGISPLKSLSVEKTVAPFVGDKDVNVRNAAINVLVACFKFEGDQMWKAAGRMADKDKSLVEERIKRTGVKPGSGVVTSPPTGGPKILVPQQQGSVVRRPASRSRTREPEPEEVQSDTFTIRQDTMPPKTSSRYALRDDVFSSAMGRLDGTQVITPPQPVNGWSNNTFQMKRTNSSSSISSIDTSDQIQRSINNISSSLADVAQDAMFQVTYVLNQPEQRHLVDRRADLVFRASAAQLDLVIEEFNAGRDVSGTMDACTQMLFILMGGVETEHGLEPLNASPDTVKAIISSVLRCIIQIGNTESGYGMARSLNRLAMRLIYRVELSNLLCGLILAMTESLQMNTGITELVSKLSSKWCDELEKRRAQLRASDIVDSFNAFYVCALTELKMDISDSHILIVDNYLERVILQQGDVVLDAARRLSRPHMHLTSMINKILQMMRERKIDPIMPGTLEARMPQEDEAVVVRSGVQVSIDNILRDTSMAVKHIEQLNILIASSDRSWNEYMEYLKNNPMGELIKELVGECSRKKRIDFNLSHVVKSSMAVFKAMAATGPVQEEGRITPTDINRMDTMIVGTPLSRGDATITRARGNMIRPKRTTLSRDQMANIRHTLDRVKNH.

2 TOG regions span residues 1 to 250 and 251 to 530; these read MSNW…AKNA and PPVA…AGPA. Residues 21–48 are a coiled coil; that stretch reads DELRESKKWQERKEALEALLKVLTDNER. HEAT repeat units follow at residues 30–68, 95–132, 135–172, and 179–217; these read QERK…VLAK, SFAG…TMQS, TGQE…AKQP, and VVPV…VKNL. Residues 243 to 278 form a disordered region; it reads AEEQAKNAPPVAPTSSTPSASAASGDPSGGTATAVV. The span at 255–276 shows a compositional bias: low complexity; that stretch reads PTSSTPSASAASGDPSGGTATA. 4 HEAT repeats span residues 339 to 377, 381 to 418, 420 to 457, and 464 to 502; these read ANYG…GLRT, PFAV…TTNL, AVGE…QTMP, and LIPS…SLQL. Residues 544–603 are disordered; it reads APPAAAPPKKTAPPKKQPEDEEVVEEEDEPLKPPPGDKKKKVPVKENEENEPPVVAPKAE. A compositionally biased stretch (acidic residues) spans 562-572; the sequence is EDEEVVEEEDE. The interval 602 to 867 is TOG 3; that stretch reads AELLLSDNED…VEERIKRTGV (266 aa). 3 HEAT repeats span residues 706–743, 764–801, and 804–841; these read IKVL…LKTG, VGPL…NAGI, and LKSL…FEGD. The segment at 867–914 is disordered; it reads VKPGSGVVTSPPTGGPKILVPQQQGSVVRRPASRSRTREPEPEEVQSD.

This sequence belongs to the TOG/XMAP215 family. As to quaternary structure, interacts with tac-1 to form a heterodimer.

It localises to the cytoplasm. The protein localises to the cytoskeleton. The protein resides in the spindle pole. It is found in the microtubule organizing center. Its subcellular location is the centrosome. Its function is as follows. Plays a major role in organizing microtubules and spindle poles during mitosis and meiosis in one-cell stage embryos. Required for default nucleus positioning in oocytes. The chain is Zygote defective protein 9 from Caenorhabditis elegans.